Reading from the N-terminus, the 394-residue chain is Elongation factor Tu 2 (394 aa).

Residues 10–204 form the tr-type G domain; it reads KPHVNVGTIG…YLDSYIPEPE (195 aa). Residues 19-26 are G1; that stretch reads GHVDHGKT. 19–26 serves as a coordination point for GTP; that stretch reads GHVDHGKT. Thr26 contributes to the Mg(2+) binding site. The interval 60 to 64 is G2; the sequence is GITIN. Residues 81–84 are G3; the sequence is DCPG. Residues 81-85 and 136-139 each bind GTP; these read DCPGH and NKCD. The tract at residues 136-139 is G4; it reads NKCD. The tract at residues 174–176 is G5; the sequence is SAL.

It belongs to the TRAFAC class translation factor GTPase superfamily. Classic translation factor GTPase family. EF-Tu/EF-1A subfamily. In terms of assembly, monomer.

Its subcellular location is the cytoplasm. The enzyme catalyses GTP + H2O = GDP + phosphate + H(+). In terms of biological role, GTP hydrolase that promotes the GTP-dependent binding of aminoacyl-tRNA to the A-site of ribosomes during protein biosynthesis. This chain is Elongation factor Tu 2, found in Serratia proteamaculans (strain 568).